The primary structure comprises 110 residues: uncharacterized protein (110 aa).

The disordered stretch occupies residues 1–72; sequence MWRSSNQRGV…NHRNIHLRNP (72 aa). Residues 10–23 are compositionally biased toward basic residues; the sequence is VSRRRDKSMRKYTR. A compositionally biased stretch (polar residues) spans 48-57; it reads KNTYTGNISS.

This is an uncharacterized protein from Human herpesvirus 6A (strain Uganda-1102) (HHV-6 variant A).